The primary structure comprises 37 residues: Cytochrome b6-f complex subunit 5 (37 aa).

The helical transmembrane segment at Leu5–Ala25 threads the bilayer.

This sequence belongs to the PetG family. The 4 large subunits of the cytochrome b6-f complex are cytochrome b6, subunit IV (17 kDa polypeptide, PetD), cytochrome f and the Rieske protein, while the 4 small subunits are PetG, PetL, PetM and PetN. The complex functions as a dimer.

Its subcellular location is the plastid. The protein resides in the chloroplast thylakoid membrane. Its function is as follows. Component of the cytochrome b6-f complex, which mediates electron transfer between photosystem II (PSII) and photosystem I (PSI), cyclic electron flow around PSI, and state transitions. PetG is required for either the stability or assembly of the cytochrome b6-f complex. The polypeptide is Cytochrome b6-f complex subunit 5 (Chlamydomonas moewusii (Chlamydomonas eugametos)).